The sequence spans 843 residues: Complement component C7 (843 aa).

A signal peptide spans 1–22 (MKVISLFILVGFIGEFQSFSSA). One can recognise a TSP type-1 1 domain in the interval 27 to 80 (NCQWDFYAPWSECNGCTKTQTRRRSVAVYGQYGGQPCVGNAFETQSCEPTRGCP). 7 disulfides stabilise this stretch: C28/C63, C39/C73, C42/C79, C85/C96, C91/C109, C103/C119, and C128/C165. W36 carries a C-linked (Man) tryptophan glycan. Residues 83–121 (EGCGERFRCFSGQCISKSLVCNGDSDCDEDSADEDRCED) enclose the LDL-receptor class A domain. The segment covering 108–120 (DCDEDSADEDRCE) has biased composition (acidic residues). The disordered stretch occupies residues 108 to 143 (DCDEDSADEDRCEDSERRPSCDIDKPPPNIELTGNG). Basic and acidic residues predominate over residues 121–132 (DSERRPSCDIDK). Positions 124-456 (RRPSCDIDKP…EYLDEFDPCH (333 aa)) constitute an MACPF domain. N202 carries an N-linked (GlcNAc...) asparagine glycan. The segment at 219–240 (SRKRSFFRSSSSSSRSYTSHTN) is disordered. Over residues 225-234 (FRSSSSSSRS) the composition is skewed to low complexity. Intrachain disulfides connect C337–C353, C433–C560, C455–C505, C457–C473, C460–C475, C477–C486, C512–C545, C523–C535, C571–C613, C599–C626, C631–C673, and C659–C688. Residues 457–487 (CRPCQNGGLATVEGTHCLCHCKPYTFGAACE) form the EGF-like domain. One can recognise a TSP type-1 2 domain in the interval 500–549 (DGGWSCWSSWSPCVQGKKTRSRECNNPPPSGGGRSCVGETTESTQCEDEE). C-linked (Man) tryptophan; partial glycans are attached at residues W503, W506, and W509. A disordered region spans residues 516–538 (KKTRSRECNNPPPSGGGRSCVGE). CCP regions lie at residues 545–615 (CEDE…RCGE) and 616–693 (DLRW…QKEN). 2 Sushi domains span residues 569–628 (EFCP…HCQK) and 629–690 (IACV…RCVQ). 2 factor I module (FIM) regions span residues 695 to 770 (LTQA…ASAE) and 771 to 843 (KACG…AETQ). Residue T696 is glycosylated (O-linked (GalNAc...) threonine). Disulfide bonds link C702-C713, C715-C750, C721-C743, C728-C763, C773-C782, C776-C789, C791-C825, C797-C818, and C805-C838. N754 is a glycosylation site (N-linked (GlcNAc...) (complex) asparagine).

Belongs to the complement C6/C7/C8/C9 family. Monomer or dimer; as a C5b-7 complex it can also form multimeric rosettes. Component of the membrane attack complex (MAC), composed of complement C5b, C6, C7, C8A, C8B, C8G and multiple copies of the pore-forming subunit C9. In terms of processing, C-, N- and O-glycosylated. O-glycosylated with core 1 or possibly core 8 glycans.

The protein resides in the secreted. It is found in the target cell membrane. Its activity is regulated as follows. Membrane attack complex (MAC) assembly is inhibited by CD59, thereby protecting self-cells from damage during complement activation. MAC assembly is also inhibited by clusterin (CLU) chaperones that inhibit polymerization of C9. Its function is as follows. Component of the membrane attack complex (MAC), a multiprotein complex activated by the complement cascade, which inserts into a target cell membrane and forms a pore, leading to target cell membrane rupture and cell lysis. The MAC is initiated by proteolytic cleavage of C5 into complement C5b in response to the classical, alternative, lectin and GZMK complement pathways. The complement pathways consist in a cascade of proteins that leads to phagocytosis and breakdown of pathogens and signaling that strengthens the adaptive immune system. C7 serves as a membrane anchor. During MAC assembly, associates with C5b and C6 to form the C5b-7 complex, a key lipophilic precursor of the MAC complex, which associates with the outer leaflet and reduces the energy for membrane bending. The sequence is that of Complement component C7 from Homo sapiens (Human).